The following is a 224-amino-acid chain: Small ribosomal subunit protein uS3 (224 aa).

In terms of domain architecture, KH type-2 spans 39 to 107 (IREFLKKKPS…DVWVEIAEVK (69 aa)).

Belongs to the universal ribosomal protein uS3 family. In terms of assembly, part of the 30S ribosomal subunit. Forms a tight complex with proteins S10 and S14.

In terms of biological role, binds the lower part of the 30S subunit head. Binds mRNA in the 70S ribosome, positioning it for translation. In Chlamydia muridarum (strain MoPn / Nigg), this protein is Small ribosomal subunit protein uS3.